The sequence spans 210 residues: Large ribosomal subunit protein uL4 (210 aa).

Polar residues predominate over residues Gln41 to Ala51. The tract at residues Gln41 to Ser77 is disordered. Positions Gly60–Gly71 are enriched in basic residues.

This sequence belongs to the universal ribosomal protein uL4 family. As to quaternary structure, part of the 50S ribosomal subunit.

In terms of biological role, one of the primary rRNA binding proteins, this protein initially binds near the 5'-end of the 23S rRNA. It is important during the early stages of 50S assembly. It makes multiple contacts with different domains of the 23S rRNA in the assembled 50S subunit and ribosome. Functionally, forms part of the polypeptide exit tunnel. This is Large ribosomal subunit protein uL4 from Synechocystis sp. (strain ATCC 27184 / PCC 6803 / Kazusa).